The following is a 641-amino-acid chain: Transcription termination factor MTERF2, chloroplastic (641 aa).

Disordered stretches follow at residues 54-80 (LKLNKNPNESQETFVPPPPPPRRDLDG) and 606-641 (FEAGLDSEDSQPSDENISDQEIAFSDEAEEEEDLTE). The segment covering 610–641 (LDSEDSQPSDENISDQEIAFSDEAEEEEDLTE) has biased composition (acidic residues).

Belongs to the mTERF family.

Its subcellular location is the plastid. It localises to the chloroplast. Functionally, transcription termination factor involved in processing of plastid transcripts. Essential for embryogenesis. The sequence is that of Transcription termination factor MTERF2, chloroplastic from Arabidopsis thaliana (Mouse-ear cress).